The sequence spans 490 residues: Glucose-6-phosphate 1-dehydrogenase (490 aa).

NADP(+)-binding positions include arginine 48, 90–91, and lysine 145; that span reads DI. The substrate site is built by histidine 175, lysine 179, glutamate 213, and aspartate 232. The active-site Proton acceptor is histidine 237. Residues lysine 340 and lysine 345 each contribute to the substrate site.

It belongs to the glucose-6-phosphate dehydrogenase family.

It carries out the reaction D-glucose 6-phosphate + NADP(+) = 6-phospho-D-glucono-1,5-lactone + NADPH + H(+). It participates in carbohydrate degradation; pentose phosphate pathway; D-ribulose 5-phosphate from D-glucose 6-phosphate (oxidative stage): step 1/3. Its function is as follows. Catalyzes the oxidation of glucose 6-phosphate to 6-phosphogluconolactone. This chain is Glucose-6-phosphate 1-dehydrogenase, found in Buchnera aphidicola subsp. Baizongia pistaciae (strain Bp).